The following is a 319-amino-acid chain: ATP-dependent 6-phosphofructokinase (319 aa).

G11 is a binding site for ATP. 21–25 is a binding site for ADP; it reads RAVVR. Residues 72–73 and 102–105 contribute to the ATP site; these read RC and GDGS. D103 lines the Mg(2+) pocket. 125 to 127 contacts substrate; it reads TID. D127 acts as the Proton acceptor in catalysis. R154 lines the ADP pocket. Residues R162 and 169-171 contribute to the substrate site; that span reads MGR. ADP is bound by residues 185–187, R211, and 213–215; these read GAE and KLH. Residues E222, R243, and 249–252 each bind substrate; that span reads HLQR.

This sequence belongs to the phosphofructokinase type A (PFKA) family. ATP-dependent PFK group I subfamily. Prokaryotic clade 'B1' sub-subfamily. Homotetramer. Requires Mg(2+) as cofactor.

It is found in the cytoplasm. The enzyme catalyses beta-D-fructose 6-phosphate + ATP = beta-D-fructose 1,6-bisphosphate + ADP + H(+). Its pathway is carbohydrate degradation; glycolysis; D-glyceraldehyde 3-phosphate and glycerone phosphate from D-glucose: step 3/4. With respect to regulation, allosterically activated by ADP and other diphosphonucleosides, and allosterically inhibited by phosphoenolpyruvate. Catalyzes the phosphorylation of D-fructose 6-phosphate to fructose 1,6-bisphosphate by ATP, the first committing step of glycolysis. This Clostridium novyi (strain NT) protein is ATP-dependent 6-phosphofructokinase.